Reading from the N-terminus, the 427-residue chain is Histidinol dehydrogenase (427 aa).

3 residues coordinate substrate: S232, Q254, and H257. Zn(2+) is bound by residues Q254 and H257. Catalysis depends on proton acceptor residues E322 and H323. H323, D356, E410, and H415 together coordinate substrate. A Zn(2+)-binding site is contributed by D356. H415 is a binding site for Zn(2+).

Belongs to the histidinol dehydrogenase family. Zn(2+) is required as a cofactor.

It carries out the reaction L-histidinol + 2 NAD(+) + H2O = L-histidine + 2 NADH + 3 H(+). It functions in the pathway amino-acid biosynthesis; L-histidine biosynthesis; L-histidine from 5-phospho-alpha-D-ribose 1-diphosphate: step 9/9. Functionally, catalyzes the sequential NAD-dependent oxidations of L-histidinol to L-histidinaldehyde and then to L-histidine. The protein is Histidinol dehydrogenase of Listeria innocua serovar 6a (strain ATCC BAA-680 / CLIP 11262).